The sequence spans 238 residues: Probable transcriptional regulatory protein VS_II1504 (238 aa).

This sequence belongs to the TACO1 family.

Its subcellular location is the cytoplasm. This chain is Probable transcriptional regulatory protein VS_II1504, found in Vibrio atlanticus (strain LGP32) (Vibrio splendidus (strain Mel32)).